The primary structure comprises 185 residues: Putative manganese efflux pump MntP (185 aa).

Helical transmembrane passes span 8 to 28 (LFVI…SIGL), 42 to 62 (ISFG…GVLF), 66 to 86 (ILVI…ILML), 103 to 123 (MYFI…FTVL), 137 to 157 (IFIG…SGYL), and 165 to 185 (KYAN…MIFM).

The protein belongs to the MntP (TC 9.B.29) family.

The protein localises to the cell membrane. Its function is as follows. Probably functions as a manganese efflux pump. The sequence is that of Putative manganese efflux pump MntP from Clostridium novyi (strain NT).